A 126-amino-acid chain; its full sequence is Fluoride-specific ion channel FluC (126 aa).

A run of 4 helical transmembrane segments spans residues 4 to 24 (LLLV…TSAW), 36 to 56 (GTLL…TASL), 67 to 85 (LFLA…SFNY), and 101 to 121 (AYLL…TLLV). Na(+)-binding residues include G75 and T78.

This sequence belongs to the fluoride channel Fluc/FEX (TC 1.A.43) family.

The protein resides in the cell inner membrane. It catalyses the reaction fluoride(in) = fluoride(out). With respect to regulation, na(+) is not transported, but it plays an essential structural role and its presence is essential for fluoride channel function. In terms of biological role, fluoride-specific ion channel. Important for reducing fluoride concentration in the cell, thus reducing its toxicity. The chain is Fluoride-specific ion channel FluC from Anaeromyxobacter dehalogenans (strain 2CP-1 / ATCC BAA-258).